The chain runs to 307 residues: tRNA dimethylallyltransferase (307 aa).

ATP is bound at residue 9–16; sequence GPTAIGKT. A substrate-binding site is contributed by 11 to 16; the sequence is TAIGKT. Interaction with substrate tRNA stretches follow at residues 34 to 37 and 164 to 168; these read DSRQ and QRMMR.

The protein belongs to the IPP transferase family. Monomer. Requires Mg(2+) as cofactor.

It carries out the reaction adenosine(37) in tRNA + dimethylallyl diphosphate = N(6)-dimethylallyladenosine(37) in tRNA + diphosphate. Its function is as follows. Catalyzes the transfer of a dimethylallyl group onto the adenine at position 37 in tRNAs that read codons beginning with uridine, leading to the formation of N6-(dimethylallyl)adenosine (i(6)A). The chain is tRNA dimethylallyltransferase from Flavobacterium psychrophilum (strain ATCC 49511 / DSM 21280 / CIP 103535 / JIP02/86).